The primary structure comprises 128 residues: Peptidyl-prolyl cis-trans isomerase pin4 (128 aa).

The tract at residues 1–35 (MGKGNAKNSGGGDKKSKAKAGDAKDDSKGKMKGAQ) is disordered. Basic and acidic residues predominate over residues 12-29 (GDKKSKAKAGDAKDDSKG). Residues 34–126 (AQSVNVRHIL…YGYHIIMVEG (93 aa)) form the PpiC domain.

This sequence belongs to the PpiC/parvulin rotamase family. PIN4 subfamily.

The enzyme catalyses [protein]-peptidylproline (omega=180) = [protein]-peptidylproline (omega=0). Functionally, PPIases accelerate the folding of proteins. It catalyzes the cis-trans isomerization of proline imidic peptide bonds in oligopeptides. The protein is Peptidyl-prolyl cis-trans isomerase pin4 (pin4) of Emericella nidulans (strain FGSC A4 / ATCC 38163 / CBS 112.46 / NRRL 194 / M139) (Aspergillus nidulans).